Reading from the N-terminus, the 223-residue chain is Peptidyl-prolyl cis-trans isomerase FKBP16-3, chloroplastic (223 aa).

Residues 1–36 (MAASSPSLLLPLGSASRNGLTTKNPNSSRYIAARVI) constitute a chloroplast transit peptide. A thylakoid-targeting transit peptide spans 37-76 (ASETREQSCKISNLSSRREAMLLVLGVSGGLSMSSLAAYA). The 93-residue stretch at 124 to 216 (GFQVAANYVA…IFDVSLEFIP (93 aa)) folds into the PPIase FKBP-type domain.

The protein belongs to the FKBP-type PPIase family.

Its subcellular location is the plastid. The protein resides in the chloroplast thylakoid lumen. It carries out the reaction [protein]-peptidylproline (omega=180) = [protein]-peptidylproline (omega=0). Its function is as follows. PPIases accelerate the folding of proteins. It catalyzes the cis-trans isomerization of proline imidic peptide bonds in oligopeptides. This is Peptidyl-prolyl cis-trans isomerase FKBP16-3, chloroplastic (FKBP16-3) from Arabidopsis thaliana (Mouse-ear cress).